Consider the following 291-residue polypeptide: MPSSGALKDLSFSQHFRMMVICIVLLQVLLQAVSVAVTYMYFTNEMKQLQDNYSKIGLACFSKTDEDFWDSTDGEILNRPCLQVKRQLYQLIEEVTLRTFQDTISTVPEKQLSTPPLPRGGRPQKVAAHITGITRRSNSALIPISKDGKTLGQKIESWESSRKGHSFLNHVLFRNGELVIEQEGLYYIYSQTYFRFQEAEDASKMVSKDKVRTKQLVQYIYKYTSYPDPIVLMKSARNSCWSRDAEYGLYSIYQGGLFELKKNDRIFVSVTNEHLMDLDQEASFFGAFLIN.

The Cytoplasmic segment spans residues 1 to 17 (MPSSGALKDLSFSQHFR). The chain crosses the membrane as a helical; Signal-anchor for type II membrane protein span at residues 18 to 38 (MMVICIVLLQVLLQAVSVAVT). The Extracellular portion of the chain corresponds to 39–291 (YMYFTNEMKQ…ASFFGAFLIN (253 aa)). The N-linked (GlcNAc...) asparagine glycan is linked to Asn52. Residues 126 to 290 (VAAHITGITR…EASFFGAFLI (165 aa)) form the THD domain. A Zn(2+)-binding site is contributed by Cys240.

This sequence belongs to the tumor necrosis factor family. As to quaternary structure, homotrimer. One TNFSF10 homotrimer interacts with three TNFSF10A mononers. One TNFSF10 homotrimer interacts with three TNFSF10B mononers. Tyrosine phosphorylated by PKDCC/VLK. Widespread.

It localises to the cell membrane. The protein resides in the secreted. Cytokine that binds to TNFRSF10A/TRAILR1, TNFRSF10B/TRAILR2, TNFRSF10C/TRAILR3, TNFRSF10D/TRAILR4 and possibly also to TNFRSF11B/OPG. Induces apoptosis. Its activity may be modulated by binding to the decoy receptors TNFRSF10C/TRAILR3, TNFRSF10D/TRAILR4 and TNFRSF11B/OPG that cannot induce apoptosis. This chain is Tumor necrosis factor ligand superfamily member 10 (Tnfsf10), found in Mus musculus (Mouse).